The primary structure comprises 913 residues: WD repeat-containing protein 44 (913 aa).

The span at 1–14 (MASESDTEEFYDAP) shows a compositional bias: acidic residues. Residues 1-24 (MASESDTEEFYDAPEDVHLGGGYP) form a disordered region. At alanine 2 the chain carries N-acetylalanine. The binding activity stretch occupies residues 2–170 (ASESDTEEFY…SSTEQLNVLE (169 aa)). A Phosphoserine modification is found at serine 3. An FFAT-like motif motif is present at residues 9–15 (EFYDAPE). Tyrosine 11 bears the Phosphotyrosine mark. Serine 27, serine 50, serine 66, serine 71, serine 81, serine 96, and serine 126 each carry phosphoserine. The stretch at 119–184 (EESQKAESQN…VLNKEAVEVK (66 aa)) forms a coiled coil. A phosphothreonine mark is found at threonine 158 and threonine 219. The segment at 205–348 (AVEEVAPAKP…RPRSNSGREL (144 aa)) is disordered. An important for interaction with ARHGAP26 AND ARHGAP10 region spans residues 211–257 (PAKPPRHLTPEPDIVASTKKPVPARPPPPTNFPPPRPPPPSRPAPPP). The segment covering 233 to 256 (PARPPPPTNFPPPRPPPPSRPAPP) has biased composition (pro residues). A Phosphoserine modification is found at serine 262. The span at 262-278 (SELEFETLKTPDIDVPK) shows a compositional bias: basic and acidic residues. Threonine 271 carries the phosphothreonine modification. Residues 280-311 (NITSDSLLTASMASESTVKDSQPSLDLASATS) show a composition bias toward polar residues. The segment at 334-347 (VMGPQRPRSNSGRE) is important for interaction with RAB11A. 2 positions are modified to phosphoserine; by PKB/AKT1: serine 342 and serine 344. Threonine 349 is modified (phosphothreonine). 2 disordered regions span residues 397 to 424 (SNDA…LKQK) and 459 to 480 (DEVF…MPYT). Phosphoserine is present on residues serine 403, serine 470, serine 471, and serine 472. Residues 467–476 (DDPSSSDDEG) show a composition bias toward acidic residues. Tyrosine 479 carries the phosphotyrosine modification. The WD 1 repeat unit spans residues 509–548 (EHMGAVWTMKFSHCGRLLASAGQDNVVRIWALKNAFDYFN). Residues 557-593 (EGRVSPSPSQESLSSSKSDTDTGVCSGTDEDPDDKNA) are disordered. Phosphoserine is present on residues serine 561 and serine 565. Residues 561-573 (SPSPSQESLSSSK) show a composition bias toward low complexity. WD repeat units lie at residues 605–643 (GHTA…CLCC), 645–685 (QHID…VALW), 690–729 (GQTK…YHTQ), 740–779 (KVGR…LSMK), 784–823 (VNSS…SKFT), and 876–913 (VLDA…KNVS).

Interacts with the GTP-bound form of RAB11A and RAB11B. Interacts with GRAF1/ARHGAP26 or GRAF2/ARHGAP10; the interaction connects the endoplasmic reticulum (ER) with the endosomal tubule. Interacts (via FFAT-like motif) with VAPA (via MSP domain) or VAPB (via MSP domain); the interaction connects the ER with the endosomal tubule. Does not bind to RAB7, RAB10, RAB14, RAB35 and RAB8A. In terms of processing, phosphorylated by ATK1; the phosphorylation stabilizes its interaction with RAB11A and RAB11B.

The protein resides in the cytoplasm. It localises to the cytosol. It is found in the perinuclear region. Its subcellular location is the endosome membrane. The protein localises to the golgi apparatus. The protein resides in the trans-Golgi network. Its function is as follows. Downstream effector for Rab11 which regulates Rab11 intracellular membrane trafficking functions such as endocytic recycling, intracellular ciliogenesis and protein export. ATK1-mediated phosphorylation of WDR44 induces binding to Rab11 which activates endocytic recycling of transferrin receptor back to the plasma membrane. When bound to Rab11, prevents the formation of the ciliogenic Rab11-Rabin8/RAB3IP-RAB11FIP3 complex, therefore inhibiting preciliary trafficking and ciliogenesis. Participates in neo-synthesized protein export by connecting the endoplasmic reticulum (ER) with the endosomal tubule via direct interactions with the integral ER proteins VAPA or VAPB and the endosomal protein GRAFs (GRAF1/ARHGAP26 or GRAF2/ARHGAP10), which facilitates the transfer of proteins such as E-cadherin, MPP14 and CFTR into a Rab8-Rab10-Rab11-dependent export route. In Homo sapiens (Human), this protein is WD repeat-containing protein 44.